Here is a 234-residue protein sequence, read N- to C-terminus: uncharacterized protein (234 aa).

Transmembrane regions (helical) follow at residues 5–23, 38–60, 73–92, 127–149, 170–192, and 197–217; these read LFYISAIFVPEAIWLLWSF, IPTAYVTAFISGDALLAVIGFWV, AHIQWIAGYFAFFFVLAHGW, AITLYAMALPTIVPMIAGGYIWL, GVAIYLLGVFVAFLMAACATVIS, and TQAGMLVGVIVTITVAYALAF.

The protein resides in the cell membrane. This is an uncharacterized protein from Archaeoglobus fulgidus (strain ATCC 49558 / DSM 4304 / JCM 9628 / NBRC 100126 / VC-16).